The chain runs to 356 residues: DNA integrity scanning protein DisA (356 aa).

The region spanning 11 to 149 (VHTMRDTLQR…EGKSHILEEP (139 aa)) is the DAC domain. Residues glycine 78, leucine 96, and 109–113 (TRHRS) each bind ATP.

It belongs to the DisA family. Homooctamer. It depends on Mg(2+) as a cofactor.

It carries out the reaction 2 ATP = 3',3'-c-di-AMP + 2 diphosphate. Participates in a DNA-damage check-point. DisA forms globular foci that rapidly scan along the chromosomes searching for lesions. Its function is as follows. Also has diadenylate cyclase activity, catalyzing the condensation of 2 ATP molecules into cyclic di-AMP (c-di-AMP). c-di-AMP likely acts as a signaling molecule that may couple DNA integrity with a cellular process. This chain is DNA integrity scanning protein DisA, found in Corynebacterium efficiens (strain DSM 44549 / YS-314 / AJ 12310 / JCM 11189 / NBRC 100395).